The sequence spans 338 residues: H(2)-forming methylenetetrahydromethanopterin dehydrogenase-related protein MJ0715 (338 aa).

Belongs to the HMD family.

The chain is H(2)-forming methylenetetrahydromethanopterin dehydrogenase-related protein MJ0715 from Methanocaldococcus jannaschii (strain ATCC 43067 / DSM 2661 / JAL-1 / JCM 10045 / NBRC 100440) (Methanococcus jannaschii).